The chain runs to 479 residues: Fibrinogen beta chain (479 aa).

The N-terminal stretch at 1–18 is a signal peptide; sequence MRHLWLLLLSVSLVQTQA. The disordered stretch occupies residues 20 to 82; that stretch reads TTDSDKVDLS…VERKPPDAGG (63 aa). Residues 33-35 are beta-chain polymerization, binding distal domain of another fibrin; that stretch reads GHR. Basic and acidic residues-rich tracts occupy residues 35 to 45 and 64 to 78; these read RPVDRRKEEPP and AKVDAGQKKVERKPP. Cystine bridges form between Cys-219–Cys-304 and Cys-229–Cys-258. The Fibrinogen C-terminal domain occupies 220 to 476; the sequence is NIPVVSGKEC…RMSMKIRPVF (257 aa). Asn-382 carries an N-linked (GlcNAc...) asparagine glycan. A disulfide bond links Cys-412 and Cys-425.

As to quaternary structure, heterohexamer; disulfide linked. Contains 2 sets of 3 non-identical chains (alpha, beta and gamma). The 2 heterotrimers are in head to head conformation with the N-termini in a small central domain. In terms of processing, conversion of fibrinogen to fibrin is triggered by thrombin, which cleaves fibrinopeptides A and B from alpha and beta chains, and thus exposes the N-terminal polymerization sites responsible for the formation of the soft clot.

Its subcellular location is the secreted. Functionally, cleaved by the protease thrombin to yield monomers which, together with fibrinogen alpha (FGA) and fibrinogen gamma (FGG), polymerize to form an insoluble fibrin matrix. Fibrin has a major function in hemostasis as one of the primary components of blood clots. In addition, functions during the early stages of wound repair to stabilize the lesion and guide cell migration during re-epithelialization. Was originally thought to be essential for platelet aggregation, based on in vitro studies using anticoagulated blood. However subsequent studies have shown that it is not absolutely required for thrombus formation in vivo. Enhances expression of SELP in activated platelets. Maternal fibrinogen is essential for successful pregnancy. Fibrin deposition is also associated with infection, where it protects against IFNG-mediated hemorrhage. May also facilitate the antibacterial immune response via both innate and T-cell mediated pathways. This chain is Fibrinogen beta chain (Fgb), found in Rattus norvegicus (Rat).